A 627-amino-acid polypeptide reads, in one-letter code: DNA topoisomerase 4 subunit B (627 aa).

ATP-binding positions include Tyr-4, Asn-41, Asp-68, 109–115, and Lys-333; that span reads GLHGVGV. The 114-residue stretch at 412–525 folds into the Toprim domain; sequence TELFIVEGDS…NGHIYIAQPP (114 aa). Glu-418, Asp-490, and Asp-492 together coordinate Mg(2+).

The protein belongs to the type II topoisomerase family. ParE type 1 subfamily. As to quaternary structure, heterotetramer composed of ParC and ParE. It depends on Mg(2+) as a cofactor. The cofactor is Mn(2+). Requires Ca(2+) as cofactor.

It catalyses the reaction ATP-dependent breakage, passage and rejoining of double-stranded DNA.. Its activity is regulated as follows. Pyrrolopyrimidines inhibit both GyrB and its paralog in topoisomerase IV (parE). Topoisomerase IV is essential for chromosome segregation. It relaxes supercoiled DNA. Performs the decatenation events required during the replication of a circular DNA molecule. This is DNA topoisomerase 4 subunit B from Francisella tularensis subsp. holarctica (strain LVS).